The chain runs to 513 residues: ATP synthase subunit alpha (513 aa).

169-176 contacts ATP; sequence GDRQTGKT.

Belongs to the ATPase alpha/beta chains family. F-type ATPases have 2 components, CF(1) - the catalytic core - and CF(0) - the membrane proton channel. CF(1) has five subunits: alpha(3), beta(3), gamma(1), delta(1), epsilon(1). CF(0) has three main subunits: a(1), b(2) and c(9-12). The alpha and beta chains form an alternating ring which encloses part of the gamma chain. CF(1) is attached to CF(0) by a central stalk formed by the gamma and epsilon chains, while a peripheral stalk is formed by the delta and b chains.

It localises to the cell inner membrane. The catalysed reaction is ATP + H2O + 4 H(+)(in) = ADP + phosphate + 5 H(+)(out). Functionally, produces ATP from ADP in the presence of a proton gradient across the membrane. The alpha chain is a regulatory subunit. In Pasteurella multocida (strain Pm70), this protein is ATP synthase subunit alpha.